We begin with the raw amino-acid sequence, 368 residues long: Somatostatin receptor type 5 (368 aa).

Residues 1–45 (MEPLFPASPLTTWNTSSVVPSGSGDENGTLAGLGPSPGARAVVVP) are Extracellular-facing. 2 N-linked (GlcNAc...) asparagine glycosylation sites follow: Asn-14 and Asn-27. The chain crosses the membrane as a helical span at residues 46 to 66 (VLYLLVCAVGLGGNTLVIYVV). The Cytoplasmic portion of the chain corresponds to 67 to 77 (LRHAKMKTVTN). A helical transmembrane segment spans residues 78–98 (IYILNLAVADVLLMLGLPFVA). The Extracellular portion of the chain corresponds to 99-115 (TQNAISYWPFGPVLCRL). The cysteines at positions 113 and 188 are disulfide-linked. The helical transmembrane segment at 116-136 (VMTLDGINQFTSIFCLTVMSV) threads the bilayer. The Cytoplasmic portion of the chain corresponds to 137–158 (DRYLAVVHPIRSARWRRPRVAK). A helical transmembrane segment spans residues 159 to 179 (LASAAVWAFSLVMSLPLVVFA). At 180-207 (DIQEGWNTCNLSWPEPVGLWGAVFIIYT) the chain is on the extracellular side. Asn-189 is a glycosylation site (N-linked (GlcNAc...) asparagine). A helical transmembrane segment spans residues 208-228 (SVLGFFGPLLVICLCYLLIVV). The Cytoplasmic portion of the chain corresponds to 229–251 (KLKASGVRVGSTRRRSERKVTRM). A helical membrane pass occupies residues 252–272 (VVVVVLVFAGCWLPFFIVNIV). At 273 to 286 (NLAFALPEEPASAG) the chain is on the extracellular side. A helical membrane pass occupies residues 287–309 (AYFFVVVLSYANSCANPLLYGFL). The Cytoplasmic segment spans residues 310-368 (SDNFRQSFRKVLCLRKGYGAGAEDADATEPQPGPSSRLQEAMMPVRSCKANGLMQTSKL). Residue Cys-322 is the site of S-palmitoyl cysteine; by ZDHHC5 attachment.

The protein belongs to the G-protein coupled receptor 1 family. Heterodimer with SSTR2. Heterodimerization with SSTR2 increases cell growth inhibition activity of SSTR2. Palmitoylated by ZDHHC5, but not ZDHHC3, nor ZDHHC8. Palmitoylation creates an additional intracellular loop which is thought to be important for efficient coupling to G-proteins and may target the protein to lipid rafts.

It localises to the cell membrane. Functionally, receptor for somatostatin 28 and to a lesser extent for somatostatin-14. The activity of this receptor is mediated by G proteins which inhibit adenylyl cyclase. Increases cell growth inhibition activity of SSTR2 following heterodimerization. The protein is Somatostatin receptor type 5 (SSTR5) of Bos taurus (Bovine).